Reading from the N-terminus, the 444-residue chain is UDP-N-acetylmuramate--L-alanine ligase (444 aa).

Residue glycine 111–serine 117 participates in ATP binding.

It belongs to the MurCDEF family.

The protein resides in the cytoplasm. The catalysed reaction is UDP-N-acetyl-alpha-D-muramate + L-alanine + ATP = UDP-N-acetyl-alpha-D-muramoyl-L-alanine + ADP + phosphate + H(+). It participates in cell wall biogenesis; peptidoglycan biosynthesis. Its function is as follows. Cell wall formation. The polypeptide is UDP-N-acetylmuramate--L-alanine ligase (Leuconostoc mesenteroides subsp. mesenteroides (strain ATCC 8293 / DSM 20343 / BCRC 11652 / CCM 1803 / JCM 6124 / NCDO 523 / NBRC 100496 / NCIMB 8023 / NCTC 12954 / NRRL B-1118 / 37Y)).